The sequence spans 93 residues: Large ribosomal subunit protein uL23cy (93 aa).

It belongs to the universal ribosomal protein uL23 family. In terms of assembly, part of the 50S ribosomal subunit.

Its subcellular location is the plastid. It is found in the chloroplast. In terms of biological role, binds to 23S rRNA. The protein is Large ribosomal subunit protein uL23cy (rpl23-B) of Sorghum bicolor (Sorghum).